A 221-amino-acid polypeptide reads, in one-letter code: Prolactin-3B1 (221 aa).

Residues 1 to 30 form the signal peptide; sequence MQLPLTPLSFSGTLLLMAMSNFLLWEHVTS. Disulfide bonds link C81–C196 and C213–C221.

It belongs to the somatotropin/prolactin family.

The protein localises to the secreted. The chain is Prolactin-3B1 (PRL3B1) from Mesocricetus auratus (Golden hamster).